Here is a 119-residue protein sequence, read N- to C-terminus: Large ribosomal subunit protein uL22 (119 aa).

The protein belongs to the universal ribosomal protein uL22 family. In terms of assembly, part of the 50S ribosomal subunit.

This protein binds specifically to 23S rRNA; its binding is stimulated by other ribosomal proteins, e.g. L4, L17, and L20. It is important during the early stages of 50S assembly. It makes multiple contacts with different domains of the 23S rRNA in the assembled 50S subunit and ribosome. Its function is as follows. The globular domain of the protein is located near the polypeptide exit tunnel on the outside of the subunit, while an extended beta-hairpin is found that lines the wall of the exit tunnel in the center of the 70S ribosome. In Microcystis aeruginosa (strain NIES-843 / IAM M-2473), this protein is Large ribosomal subunit protein uL22.